Consider the following 515-residue polypeptide: Cytochrome P450 76C3 (515 aa).

A helical transmembrane segment spans residues 5–25; sequence LIQGMSLPLYFLLTLFFFFFA. Residue cysteine 451 participates in heme binding.

The protein belongs to the cytochrome P450 family. It depends on heme as a cofactor.

The protein resides in the membrane. The protein is Cytochrome P450 76C3 (CYP76C3) of Arabidopsis thaliana (Mouse-ear cress).